The sequence spans 500 residues: uncharacterized protein (500 aa).

The span at 1–13 shows a compositional bias: low complexity; that stretch reads MEPSQRSGSFSSI. The disordered stretch occupies residues 1 to 23; that stretch reads MEPSQRSGSFSSISRRRSRVDSR. Residue Ser-9 is modified to Phosphoserine. The next 12 membrane-spanning stretches (helical) occupy residues 87-107, 126-146, 156-176, 183-203, 225-245, 261-281, 312-332, 351-371, 380-400, 408-428, 445-465, and 471-491; these read VSIAFILINSLMSDMSLAVAL, LVIGIPTLISLIFLYPMLCFA, LYFRPMVVSSFAHIFGHLLYC, WIYLILIGRMLNGIGFTTFLY, MNILAQTLGFMAGPFLGGILA, VASWVMLFMWFFYMLTIIFFF, FLLFFLAEVAFIAYFTVNGYQ, GNFIALSALIVAPFILASSFL, IMLGGLFLGILAVAIHLVLDA, VYFFLYSLMIYGYSIGSAPLI, IVVQVGVSLSNTFGSICGGAI, and VGFISLCLGLAAVVYMQLIFM.

It belongs to the major facilitator superfamily.

The protein resides in the golgi apparatus. It is found in the membrane. This is an uncharacterized protein from Schizosaccharomyces pombe (strain 972 / ATCC 24843) (Fission yeast).